A 392-amino-acid chain; its full sequence is Phosphoglycerate kinase (392 aa).

Substrate is bound by residues 21 to 23, Arg36, 59 to 62, Arg114, and Arg147; these read DMN and HLGR. Residues Lys198, Glu320, and 346–349 each bind ATP; that span reads GGDT.

Belongs to the phosphoglycerate kinase family. In terms of assembly, monomer.

Its subcellular location is the cytoplasm. It catalyses the reaction (2R)-3-phosphoglycerate + ATP = (2R)-3-phospho-glyceroyl phosphate + ADP. The protein operates within carbohydrate degradation; glycolysis; pyruvate from D-glyceraldehyde 3-phosphate: step 2/5. This is Phosphoglycerate kinase (pgk) from Neisseria meningitidis serogroup B (strain ATCC BAA-335 / MC58).